The following is a 261-amino-acid chain: RING finger and CHY zinc finger domain-containing protein 1 (261 aa).

Residues 13-80 (LAQGPRGCEH…AQQTCEDCST (68 aa)) form a CHY-type zinc finger. 24 residues coordinate Zn(2+): Cys-20, His-22, Cys-33, Cys-34, Cys-40, Cys-43, His-44, His-50, Cys-62, Cys-65, Cys-75, Cys-78, Cys-87, Cys-90, His-101, Cys-102, Cys-105, Cys-108, His-118, Cys-119, Cys-122, Cys-125, His-134, and Cys-136. Residues 82-144 (FGEYYCSICH…KCIENVSRQN (63 aa)) form a CTCHY-type zinc finger. An RING-type zinc finger spans residues 145–189 (CPICLEDIHTSRVVAHVLPCGHLLHRTCYEEMLKEGYRCPLCMHS).

As to quaternary structure, monomer and homodimer. Interacts with AR, MDM2, KAT5, PLAG1, PLAGL2, COPE, UBE2D2 and GORAB/NTKLBP1. In terms of processing, subject to ubiquitination and proteasomal degradation. Interaction with PLAGL2 or KAT5 enhances protein stability. In terms of tissue distribution, detected in testis, liver, kidney and heart.

Its subcellular location is the nucleus. It is found in the nucleus speckle. The protein localises to the cytoplasm. It carries out the reaction S-ubiquitinyl-[E2 ubiquitin-conjugating enzyme]-L-cysteine + [acceptor protein]-L-lysine = [E2 ubiquitin-conjugating enzyme]-L-cysteine + N(6)-ubiquitinyl-[acceptor protein]-L-lysine.. Its pathway is protein modification; protein ubiquitination. Functionally, E3 ubiquitin-protein ligase that mediates ubiquitination of target proteins, including p53/TP53, TP73, HDAC1 and CDKN1B. Mediates ubiquitination and degradation of p53/TP53; preferentially acts on tetrameric p53/TP53. Catalyzes monoubiquitinates the translesion DNA polymerase POLH. Involved in the ribosome-associated quality control (RQC) pathway, which mediates the extraction of incompletely synthesized nascent chains from stalled ribosomes: RCHY1 acts downstream of NEMF and recognizes CAT tails associated with stalled nascent chains, leading to their ubiquitination and degradation. This Mus musculus (Mouse) protein is RING finger and CHY zinc finger domain-containing protein 1 (Rchy1).